We begin with the raw amino-acid sequence, 1020 residues long: Sodium/potassium-transporting ATPase subunit alpha-2 (1020 aa).

Positions 1–5 (MGRGA) are excised as a propeptide. Residues 1-31 (MGRGAGREYSPAATTAENGGGKKKQKEKELD) are disordered. The Cytoplasmic segment spans residues 6-85 (GREYSPAATT…NALTPPPTTP (80 aa)). Ser10 bears the Phosphoserine mark. An interaction with phosphoinositide-3 kinase region spans residues 80 to 82 (PPP). Residues 86–106 (EWVKFCRQLFGGFSILLWIGA) form a helical membrane-spanning segment. Residues 107–129 (ILCFLAYGIQAAMEDEPSNDNLY) lie on the Extracellular side of the membrane. The helical transmembrane segment at 130–150 (LGVVLAAVVIVTGCFSYYQEA) threads the bilayer. The Cytoplasmic segment spans residues 151–286 (KSSKIMDSFK…VGRTPIAMEI (136 aa)). Positions 212-227 (DNSSLTGESEPQTRSP) are enriched in polar residues. Positions 212–231 (DNSSLTGESEPQTRSPEFTH) are disordered. A helical transmembrane segment spans residues 287–306 (EHFIQLITGVAVFLGVSFFV). The Extracellular segment spans residues 307 to 318 (LSLILGYSWLEA). A helical membrane pass occupies residues 319–336 (VIFLIGIIVANVPEGLLA). Residues 337–769 (TVTVCLTLTA…EEGRLIFDNL (433 aa)) lie on the Cytoplasmic side of the membrane. The active-site 4-aspartylphosphate intermediate is the Asp374. Phosphoserine is present on residues Ser439, Ser450, Ser496, and Ser559. A Phosphothreonine modification is found at Thr570. Phosphoserine is present on residues Ser587 and Ser672. 2 residues coordinate Mg(2+): Asp714 and Asp718. Residues 770–789 (KKSIAYTLTSNIPEITPFLL) form a helical membrane-spanning segment. At 790-799 (FIIANIPLPL) the chain is on the extracellular side. A helical membrane pass occupies residues 800 to 820 (GTVTILCIDLGTDMVPAISLA). The Cytoplasmic portion of the chain corresponds to 821–840 (YEAAESDIMKRQPRNSQTDK). A Phosphoserine modification is found at Ser826. A helical membrane pass occupies residues 841–863 (LVNERLISMAYGQIGMIQALGGF). Residues 864–915 (FTYFVILAENGFLPSRLLGIRLDWDDRTMNDLEDSYGQEWTYEQRKVVEFTC) lie on the Extracellular side of the membrane. A helical transmembrane segment spans residues 916–935 (HTAFFASIVVVQWADLIICK). Residues 936 to 948 (TRRNSVFQQGMKN) are Cytoplasmic-facing. A Phosphoserine; by PKA modification is found at Ser940. The chain crosses the membrane as a helical span at residues 949–967 (KILIFGLLEETALAAFLSY). Topologically, residues 968–982 (CPGMGVALRMYPLKV) are extracellular. A helical membrane pass occupies residues 983-1003 (TWWFCAFPYSLLIFIYDEVRK). At 1004 to 1020 (LILRRYPGGWVEKETYY) the chain is on the cytoplasmic side.

It belongs to the cation transport ATPase (P-type) (TC 3.A.3) family. Type IIC subfamily. The sodium/potassium-transporting ATPase is composed of a catalytic alpha subunit, an auxiliary non-catalytic beta subunit and an additional regulatory subunit. Interacts with regulatory subunit FXYD1.

Its subcellular location is the membrane. It localises to the cell membrane. It carries out the reaction K(+)(out) + Na(+)(in) + ATP + H2O = K(+)(in) + Na(+)(out) + ADP + phosphate + H(+). In terms of biological role, this is the catalytic component of the active enzyme, which catalyzes the hydrolysis of ATP coupled with the exchange of sodium and potassium ions across the plasma membrane. This action creates the electrochemical gradient of sodium and potassium, providing the energy for active transport of various nutrients. The protein is Sodium/potassium-transporting ATPase subunit alpha-2 (ATP1A2) of Homo sapiens (Human).